Here is a 151-residue protein sequence, read N- to C-terminus: Ocs element-binding factor 1 (151 aa).

The span at 1–17 (MSSSSLSPTAGRTSGSD) shows a compositional bias: polar residues. The segment at 1–47 (MSSSSLSPTAGRTSGSDGDSAADTHRREKRRLSNRESARRSRLRKQQ) is disordered. The segment covering 22–39 (ADTHRREKRRLSNRESAR) has biased composition (basic and acidic residues). The bZIP domain maps to 24 to 87 (THRREKRRLS…TRVEQENTVL (64 aa)). Residues 26–45 (RREKRRLSNRESARRSRLRK) are basic motif. Residues 52–59 (LVQEVARL) form a leucine-zipper region.

The protein belongs to the bZIP family. In terms of tissue distribution, roots and shoots of young plants, and basal portion of leaves.

Its subcellular location is the nucleus. In terms of biological role, may contribute to developmentally specific patterns of gene expression. Binds specifically to ocs elements which are transcriptional enhancer found in the promoters of several plant genes. OCSBF-1 is able to bind to a site within each half of the ocs element as well as to animal AP-1 and CREB sites. The polypeptide is Ocs element-binding factor 1 (OBF1) (Zea mays (Maize)).